The following is a 491-amino-acid chain: Glutamate--tRNA ligase (491 aa).

The short motif at 10–20 (PSPTGYLHIGG) is the 'HIGH' region element. The 'KMSKS' region signature appears at 243-247 (KISKR). Lysine 246 is a binding site for ATP.

It belongs to the class-I aminoacyl-tRNA synthetase family. Glutamate--tRNA ligase type 1 subfamily. As to quaternary structure, monomer.

The protein resides in the cytoplasm. It carries out the reaction tRNA(Glu) + L-glutamate + ATP = L-glutamyl-tRNA(Glu) + AMP + diphosphate. Catalyzes the attachment of glutamate to tRNA(Glu) in a two-step reaction: glutamate is first activated by ATP to form Glu-AMP and then transferred to the acceptor end of tRNA(Glu). The protein is Glutamate--tRNA ligase of Desulfotalea psychrophila (strain LSv54 / DSM 12343).